We begin with the raw amino-acid sequence, 341 residues long: Phosphate acyltransferase (341 aa).

It belongs to the PlsX family. In terms of assembly, homodimer. Probably interacts with PlsY.

Its subcellular location is the cytoplasm. The catalysed reaction is a fatty acyl-[ACP] + phosphate = an acyl phosphate + holo-[ACP]. It participates in lipid metabolism; phospholipid metabolism. In terms of biological role, catalyzes the reversible formation of acyl-phosphate (acyl-PO(4)) from acyl-[acyl-carrier-protein] (acyl-ACP). This enzyme utilizes acyl-ACP as fatty acyl donor, but not acyl-CoA. The protein is Phosphate acyltransferase of Idiomarina loihiensis (strain ATCC BAA-735 / DSM 15497 / L2-TR).